The sequence spans 317 residues: MSNQYGDKNLKIFSLNSNPELAKEIADIVGVQLGKCSVTRFSDGEVQINIEESIRGCDCYIIQSTSDPVNEHIMELLIMVDALKRASAKTINIVIPYYGYARQDRKARSREPITAKLFANLLETAGATRVIALDLHAPQIQGFFDIPIDHLMGVPILGEYFEGKNLEDIVIVSPDHGGVTRARKLADRLKAPIAIIDKRRPRPNVAEVMNIVGNIEGKTAILIDDIIDTAGTITLAANALVENGAKEVYACCTHPVLSGPAVERINNSTIKELVVTNSIKLPEEKKIERFKQLSVGPLLAEAIIRVHEQQSVSYLFS.

ATP-binding positions include 43–45 (DGE) and 102–103 (RQ). The ADP site is built by K106 and R110. H136 is a binding site for Mg(2+). ADP contacts are provided by residues Q141 and 149–150 (DH). D175 lines the Mg(2+) pocket. K198 is a catalytic residue. D-ribose 5-phosphate is bound by residues R200, D224, and 228–232 (DTAGT). 311–313 (SVS) contacts ADP.

The protein belongs to the ribose-phosphate pyrophosphokinase family. Class I subfamily. Homohexamer; trimer of dimers. It depends on Mg(2+) as a cofactor.

Its subcellular location is the cytoplasm. The catalysed reaction is D-ribose 5-phosphate + ATP = 5-phospho-alpha-D-ribose 1-diphosphate + AMP + H(+). It participates in metabolic intermediate biosynthesis; 5-phospho-alpha-D-ribose 1-diphosphate biosynthesis; 5-phospho-alpha-D-ribose 1-diphosphate from D-ribose 5-phosphate (route I): step 1/1. Activated by inorganic phosphate, and to a lesser extent by sulfate ions. In addition to form a complex with ATP, Mg(2+) also acts as a cofactor. Strongly inhibited by ADP through competitive binding at the activation site and at a specific allosteric site. Less strongly inhibited by alpha,beta-methylene ATP (mADP), AMP, GDP, GMP and UTP. Functionally, involved in the biosynthesis of the central metabolite phospho-alpha-D-ribosyl-1-pyrophosphate (PRPP) via the transfer of pyrophosphoryl group from ATP to 1-hydroxyl of ribose-5-phosphate (Rib-5-P). The chain is Ribose-phosphate pyrophosphokinase from Bacillus subtilis (strain 168).